The following is a 735-amino-acid chain: E3 UFM1-protein ligase 1 homolog (735 aa).

The disordered stretch occupies residues 389-445 (RLEAEKKKQGGAKAAVKVQEETDDWGDGKKGGKGGKKNAKSVKGGSKSSAPSTSSNL). Positions 419 to 428 (GGKGGKKNAK) are enriched in basic residues. Over residues 429 to 445 (SVKGGSKSSAPSTSSNL) the composition is skewed to low complexity.

Belongs to the UFL1 family.

In terms of biological role, E3 UFM1-protein ligase that mediates ufmylation of target proteins. The chain is E3 UFM1-protein ligase 1 homolog (ufl-1) from Caenorhabditis elegans.